The following is a 187-amino-acid chain: Peptidoglycan-recognition protein 3 (187 aa).

An N-terminal signal peptide occupies residues Met-1–Ala-19. 2 disulfide bridges follow: Cys-21–Cys-144 and Cys-58–Cys-64. One can recognise an N-acetylmuramoyl-L-alanine amidase domain in the interval Lys-43 to Gly-170. The N-linked (GlcNAc...) asparagine glycan is linked to Asn-51.

The protein belongs to the N-acetylmuramoyl-L-alanine amidase 2 family.

It is found in the secreted. In terms of biological role, peptidoglycan-recognition protein probably involved in innate immunity by binding to peptidoglycans (PGN) of bacteria and activating the prophenoloxidase (proPO) cascade immune response. Binds to 1,3-beta-D-glucan and PGN. The chain is Peptidoglycan-recognition protein 3 (PGRP-3) from Holotrichia diomphalia (Korean black chafer).